A 469-amino-acid chain; its full sequence is Interstitial collagenase (469 aa).

The N-terminal stretch at 1–18 (MLSLPLLLLLLWGMGSHS) is a signal peptide. Residues 19-99 (FPTVPSETRE…PRCGVPDVAE (81 aa)) constitute a propeptide, activation peptide. Residues 90–97 (PRCGVPDV) carry the Cysteine switch motif. A Zn(2+)-binding site is contributed by cysteine 92. Residues aspartate 124 and aspartate 158 each coordinate Ca(2+). Residues histidine 168 and aspartate 170 each coordinate Zn(2+). The Ca(2+) site is built by aspartate 175, glycine 176, glycine 178, and asparagine 180. Residue histidine 183 participates in Zn(2+) binding. 3 residues coordinate Ca(2+): arginine 190, glycine 192, and aspartate 194. Histidine 196 serves as a coordination point for Zn(2+). Residues aspartate 198, glutamate 199, and glutamate 201 each contribute to the Ca(2+) site. Zn(2+) is bound at residue histidine 218. Residue glutamate 219 is part of the active site. Residues histidine 222 and histidine 228 each contribute to the Zn(2+) site. Residue threonine 274 is modified to Phosphothreonine. Hemopexin repeat units lie at residues 275-324 (PEVC…WPQL), 325-371 (PNGL…FGFP), 374-422 (VKNI…FPGI), and 423-466 (GDKV…WFNC). A disulfide bond links cysteine 278 and cysteine 466. 2 residues coordinate Ca(2+): aspartate 285 and glutamine 329. Residue tyrosine 360 is modified to Phosphotyrosine; by PKDCC. Positions 378 and 427 each coordinate Ca(2+).

Belongs to the peptidase M10A family. Ca(2+) serves as cofactor. It depends on Zn(2+) as a cofactor. Post-translationally, tyrosine phosphorylated in platelets by PKDCC/VLK.

It localises to the secreted. The protein localises to the extracellular space. The protein resides in the extracellular matrix. The catalysed reaction is Cleavage of the triple helix of collagen at about three-quarters of the length of the molecule from the N-terminus, at 775-Gly-|-Ile-776 in the alpha1(I) chain. Cleaves synthetic substrates and alpha-macroglobulins at bonds where P1' is a hydrophobic residue.. Can be activated without removal of the activation peptide. Its function is as follows. Cleaves collagens of types I, II, and III at one site in the helical domain. Also cleaves collagens of types VII and X. The polypeptide is Interstitial collagenase (MMP1) (Equus caballus (Horse)).